The sequence spans 550 residues: Zinc finger protein 426 (550 aa).

Residues 39–110 form the KRAB domain; the sequence is VSFEDVIVDF…KIVFPEWKLQ (72 aa). C2H2-type zinc fingers lie at residues 219 to 241, 274 to 296, 302 to 324, 330 to 352, 358 to 380, 386 to 408, 414 to 436, 442 to 464, 470 to 492, 498 to 522, and 528 to 550; these read FECS…QRTH, HRCK…MRTH, YECK…GRTH, YVCS…VRSH, YGCK…IRTH, FVCV…LKLH, CECK…MRTH, YTCK…MRIH, YECK…ERTH, YECK…SHTH, and YKCQ…ERIH.

Its subcellular location is the nucleus. May be involved in transcriptional regulation. In Mus musculus (Mouse), this protein is Zinc finger protein 426 (Znf426).